Reading from the N-terminus, the 184-residue chain is Large ribosomal subunit protein uL10 (184 aa).

Belongs to the universal ribosomal protein uL10 family. In terms of assembly, part of the ribosomal stalk of the 50S ribosomal subunit. The N-terminus interacts with L11 and the large rRNA to form the base of the stalk. The C-terminus forms an elongated spine to which L12 dimers bind in a sequential fashion forming a multimeric L10(L12)X complex.

Its function is as follows. Forms part of the ribosomal stalk, playing a central role in the interaction of the ribosome with GTP-bound translation factors. The sequence is that of Large ribosomal subunit protein uL10 from Gluconobacter oxydans (strain 621H) (Gluconobacter suboxydans).